The following is a 306-amino-acid chain: Protein pxr1 (306 aa).

Positions 1–11 are enriched in basic residues; that stretch reads MGLAAPRKRTK. Disordered regions lie at residues 1 to 27 and 148 to 241; these read MGLA…STSG and AQKE…SDIP. The span at 15-27 shows a compositional bias: polar residues; the sequence is DPNNTNWSRSTSG. The G-patch domain maps to 25-79; it reads TSGYGHKIMSSQGWTPGSFLGARNAAHADMFTAASASHIRVVVKDDTLGLGARSK. Positions 182 to 191 are enriched in basic and acidic residues; sequence NTLKALREEQ. The span at 219 to 228 shows a compositional bias: basic residues; that stretch reads KKERKTKKRK.

Belongs to the PINX1 family.

The protein localises to the nucleus. Its subcellular location is the nucleolus. Functionally, involved in rRNA-processing at A0, A1 and A2 sites and negatively regulates telomerase. This Aspergillus oryzae (strain ATCC 42149 / RIB 40) (Yellow koji mold) protein is Protein pxr1 (pxr1).